A 168-amino-acid chain; its full sequence is Probable prefoldin subunit 5 (168 aa).

The protein belongs to the prefoldin subunit alpha family. Heterohexamer of two PFD-alpha type and four PFD-beta type subunits.

Binds specifically to cytosolic chaperonin (c-CPN) and transfers target proteins to it. Binds to nascent polypeptide chain and promotes folding in an environment in which there are many competing pathways for nonnative proteins. In Drosophila melanogaster (Fruit fly), this protein is Probable prefoldin subunit 5.